The following is a 953-amino-acid chain: MEESSSVAMLVPDIGEQEAILTAESIISPSLEIDEQRKTKPDPLIHVIQKLSKIVENEKSQKCLLIGKKRPRSSAATHSLETQELCEIPAKVIQSPAADTRRAEMSQTNFTPDTLAQNEGKAMSYQCSLCKFLSSSFSVLKDHIKQHGQQNEVILMCSECHITSRSQEELEAHVVNDHDNDANIHTQSKAQQCVSPSSSLCRKTTERNETIPDIPVSVDNLQTHTVQTASVAEMGRRKWYAYEQYGMYRCLFCSYTCGQQRMLKTHAWKHAGEVDCSYPIFENENEPLGLLDSSAAAAPGGVDAVVIAIGESELSIHNGPSVQVQICSSEQLSSSSPLEQSAERGVHLSQSVTLDPNEEEMLEVISDAEENLIPDSLLTSAQKIISSSPNKKGHVNVIVERLPSAEETLSQKRFLMNTEMEEGKDLSLTEAQIGREGMDDVYRADKCTVDIGGLIIGWSSSEKKDELMNKGLATDENAPPGRRRTNSESLRLHSLAAEALVTMPIRAAELTRANLGHYGDINLLDPDTSQRQVDSTLAAYSKMMSPLKNSSDGLTSLNQSNSTLVALPEGRQELSDGQVKTGISMSLLTVIEKLRERTDQNASDDDILKELQDNAQCQPNSDTSLSGNNVVEYIPNAERPYRCRLCHYTSGNKGYIKQHLRVHRQRQPYQCPICEHIADNSKDLESHMIHHCKTRIYQCKQCEESFHYKSQLRNHEREQHSLPDTLSIATSNEPRISSDTADGKCVQEGNKSSVQKQYRCDVCDYTSTTYVGVRNHRRIHNSDKPYRCSLCGYVCSHPPSLKSHMWKHASDQNYNYEQVNKAINDAISQSGRVLGKSPGKTQLKSSEESADPVTGSSENAVSSSELMSQTPSEVLGTNENEKLSPTSNTSYSLEKISSLAPPSMEYCVLLFCCCICGFESTSKENLLDHMKEHEGEIVNIILNKDHNTALNTN.

The residue at position 95 (Ser-95) is a Phosphoserine. 3 C2H2-type zinc fingers span residues 125–147 (YQCS…IKQH), 155–185 (LMCS…ANIH), and 248–270 (YRCL…AWKH). A Phosphoserine modification is found at Ser-427. The segment at 470 to 489 (KGLATDENAPPGRRRTNSES) is disordered. 5 C2H2-type zinc fingers span residues 641-663 (YRCR…LRVH), 669-691 (YQCP…MIHH), 697-720 (YQCK…REQH), 758-780 (YRCD…RRIH), and 786-808 (YRCS…MWKH). The tract at residues 831 to 888 (GRVLGKSPGKTQLKSSEESADPVTGSSENAVSSSELMSQTPSEVLGTNENEKLSPTSN) is disordered. Over residues 854 to 888 (TGSSENAVSSSELMSQTPSEVLGTNENEKLSPTSN) the composition is skewed to polar residues. The C2H2-type 9 zinc-finger motif lies at 911-933 (FCCCICGFESTSKENLLDHMKEH).

It belongs to the krueppel C2H2-type zinc-finger protein family.

It is found in the nucleus. May be involved in transcriptional regulation. The protein is Zinc finger protein 507 (ZNF507) of Homo sapiens (Human).